Here is a 127-residue protein sequence, read N- to C-terminus: Fluoride-specific ion channel FluC (127 aa).

Helical transmembrane passes span 3–23 (ALLL…LLGV), 36–56 (GTFA…GGLA), 72–92 (VGAL…ALMI), and 101–121 (FAYS…GLLL). G76 and T79 together coordinate Na(+).

The protein belongs to the fluoride channel Fluc/FEX (TC 1.A.43) family.

It is found in the cell inner membrane. The enzyme catalyses fluoride(in) = fluoride(out). Its activity is regulated as follows. Na(+) is not transported, but it plays an essential structural role and its presence is essential for fluoride channel function. Fluoride-specific ion channel. Important for reducing fluoride concentration in the cell, thus reducing its toxicity. In Phenylobacterium zucineum (strain HLK1), this protein is Fluoride-specific ion channel FluC.